The following is a 214-amino-acid chain: 3-isopropylmalate dehydratase small subunit (214 aa).

This sequence belongs to the LeuD family. LeuD type 1 subfamily. As to quaternary structure, heterodimer of LeuC and LeuD.

It carries out the reaction (2R,3S)-3-isopropylmalate = (2S)-2-isopropylmalate. The protein operates within amino-acid biosynthesis; L-leucine biosynthesis; L-leucine from 3-methyl-2-oxobutanoate: step 2/4. In terms of biological role, catalyzes the isomerization between 2-isopropylmalate and 3-isopropylmalate, via the formation of 2-isopropylmaleate. The sequence is that of 3-isopropylmalate dehydratase small subunit from Alcanivorax borkumensis (strain ATCC 700651 / DSM 11573 / NCIMB 13689 / SK2).